The sequence spans 263 residues: Retinoic acid early transcript 1E (263 aa).

Residues Met-1–Gly-30 form the signal peptide. Residues His-31–Asp-116 form an MHC class I alpha-1 like; down-regulates the cell surface expression of KLRK1 region. The Extracellular segment spans residues His-31–Asp-225. Asn-36, Asn-154, and Asn-212 each carry an N-linked (GlcNAc...) asparagine glycan. Residues Pro-117 to Thr-207 are MHC class I alpha-2 like; down-regulates the cell surface expression of KLRK1. The cysteines at positions 126 and 189 are disulfide-linked. A helical transmembrane segment spans residues Arg-226–Trp-248. Residues Gln-249 to Ser-263 are Cytoplasmic-facing.

This sequence belongs to the MHC class I family. In terms of assembly, binds to KLRK1/NKG2D. (Microbial infection) Contrary to other family members, does not interact with CMV glycoprotein UL16. Predominantly expressed in the skin, but also expressed in testis and trachea. Up-regulated in tumor cells of different origins. Expression progressively decreased after treatment of tumor cells with retinoic acid.

It is found in the membrane. The protein resides in the secreted. Its function is as follows. Binds and activates the KLRK1/NKG2D receptor, mediating natural killer cell cytotoxicity. In Homo sapiens (Human), this protein is Retinoic acid early transcript 1E.